The chain runs to 123 residues: Small ribosomal subunit protein uS12 (123 aa).

Asp-89 is modified (3-methylthioaspartic acid). The segment at 104-123 is disordered; sequence TAGVKDRKQARSKYGAKRPK. A compositionally biased stretch (basic residues) spans 113–123; sequence ARSKYGAKRPK.

The protein belongs to the universal ribosomal protein uS12 family. As to quaternary structure, part of the 30S ribosomal subunit. Contacts proteins S8 and S17. May interact with IF1 in the 30S initiation complex.

Functionally, with S4 and S5 plays an important role in translational accuracy. Interacts with and stabilizes bases of the 16S rRNA that are involved in tRNA selection in the A site and with the mRNA backbone. Located at the interface of the 30S and 50S subunits, it traverses the body of the 30S subunit contacting proteins on the other side and probably holding the rRNA structure together. The combined cluster of proteins S8, S12 and S17 appears to hold together the shoulder and platform of the 30S subunit. The chain is Small ribosomal subunit protein uS12 from Neisseria gonorrhoeae (strain ATCC 700825 / FA 1090).